Consider the following 147-residue polypeptide: Basic phospholipase A2 beta-bungarotoxin A1 chain (147 aa).

A signal peptide spans 1–19 (MNPAHLLVLSAVCVSLLGA). Positions 20–27 (ANIPPHPL) are excised as a propeptide. Intrachain disulfides connect C54-C146, C56-C72, C71-C127, C78-C120, C88-C113, and C106-C118. 3 residues coordinate Ca(2+): Y55, G57, and G59. Residue H75 is part of the active site. Ca(2+) is bound at residue D76. Residue D121 is part of the active site.

It belongs to the phospholipase A2 family. Group I subfamily. D49 sub-subfamily. As to quaternary structure, heterodimer; disulfide-linked. The A chains have phospholipase A2 activity and the B chains show homology with the basic protease inhibitors. The A1 chain is found in beta-1 and beta-2 bungarotoxins. The cofactor is Ca(2+). Expressed by the venom gland.

The protein resides in the secreted. It catalyses the reaction a 1,2-diacyl-sn-glycero-3-phosphocholine + H2O = a 1-acyl-sn-glycero-3-phosphocholine + a fatty acid + H(+). Snake venom phospholipase A2 (PLA2) that inhibits neuromuscular transmission by blocking acetylcholine release from the nerve termini. PLA2 catalyzes the calcium-dependent hydrolysis of the 2-acyl groups in 3-sn-phosphoglycerides. The sequence is that of Basic phospholipase A2 beta-bungarotoxin A1 chain from Bungarus multicinctus (Many-banded krait).